Reading from the N-terminus, the 208-residue chain is Imidazole glycerol phosphate synthase subunit HisH (208 aa).

A Glutamine amidotransferase type-1 domain is found at 1–206 (MIVIIDYDTG…KEVTESCKSS (206 aa)). The active-site Nucleophile is the Cys79. Active-site residues include His181 and Glu183.

As to quaternary structure, heterodimer of HisH and HisF.

The protein localises to the cytoplasm. It carries out the reaction 5-[(5-phospho-1-deoxy-D-ribulos-1-ylimino)methylamino]-1-(5-phospho-beta-D-ribosyl)imidazole-4-carboxamide + L-glutamine = D-erythro-1-(imidazol-4-yl)glycerol 3-phosphate + 5-amino-1-(5-phospho-beta-D-ribosyl)imidazole-4-carboxamide + L-glutamate + H(+). The catalysed reaction is L-glutamine + H2O = L-glutamate + NH4(+). Its pathway is amino-acid biosynthesis; L-histidine biosynthesis; L-histidine from 5-phospho-alpha-D-ribose 1-diphosphate: step 5/9. IGPS catalyzes the conversion of PRFAR and glutamine to IGP, AICAR and glutamate. The HisH subunit catalyzes the hydrolysis of glutamine to glutamate and ammonia as part of the synthesis of IGP and AICAR. The resulting ammonia molecule is channeled to the active site of HisF. In Listeria innocua serovar 6a (strain ATCC BAA-680 / CLIP 11262), this protein is Imidazole glycerol phosphate synthase subunit HisH.